Reading from the N-terminus, the 329-residue chain is Cytosolic arginine sensor for mTORC1 subunit 2 (329 aa).

2 ACT domains span residues 72-140 and 262-322; these read ADAT…HTLS and ELWK…SALK.

This sequence belongs to the GATS family. Forms homodimers and heterodimers with CASTOR1. Interacts with the GATOR2 complex which is composed of MIOS, SEC13, SEH1L, WDR24 and WDR59; the interaction is not regulated by arginine. In terms of tissue distribution, widely expressed.

The protein localises to the cytoplasm. The protein resides in the cytosol. In terms of biological role, functions as a negative regulator of the TORC1 signaling pathway through the GATOR complex. As part of homodimers or heterodimers with CASTOR1, directly binds and inhibits the GATOR subcomplex GATOR2 and thereby mTORC1. Does not directly bind arginine, but binding of arginine to CASTOR1 disrupts the interaction of CASTOR2-containing heterodimers with GATOR2 which can in turn activate mTORC1 and the TORC1 signaling pathway. The polypeptide is Cytosolic arginine sensor for mTORC1 subunit 2 (Homo sapiens (Human)).